The primary structure comprises 320 residues: o-succinylbenzoate synthase (320 aa).

Lys133 functions as the Proton donor in the catalytic mechanism. Residues Asp161, Glu190, and Asp213 each contribute to the Mg(2+) site. Catalysis depends on Lys235, which acts as the Proton acceptor.

This sequence belongs to the mandelate racemase/muconate lactonizing enzyme family. MenC type 1 subfamily. A divalent metal cation is required as a cofactor.

It catalyses the reaction (1R,6R)-6-hydroxy-2-succinyl-cyclohexa-2,4-diene-1-carboxylate = 2-succinylbenzoate + H2O. Its pathway is quinol/quinone metabolism; 1,4-dihydroxy-2-naphthoate biosynthesis; 1,4-dihydroxy-2-naphthoate from chorismate: step 4/7. It participates in quinol/quinone metabolism; menaquinone biosynthesis. Converts 2-succinyl-6-hydroxy-2,4-cyclohexadiene-1-carboxylate (SHCHC) to 2-succinylbenzoate (OSB). The chain is o-succinylbenzoate synthase from Salmonella newport (strain SL254).